A 361-amino-acid polypeptide reads, in one-letter code: Peptide chain release factor 1 (361 aa).

Position 237 is an N5-methylglutamine (Gln-237).

Belongs to the prokaryotic/mitochondrial release factor family. Methylated by PrmC. Methylation increases the termination efficiency of RF1.

The protein resides in the cytoplasm. In terms of biological role, peptide chain release factor 1 directs the termination of translation in response to the peptide chain termination codons UAG and UAA. The protein is Peptide chain release factor 1 of Chromohalobacter salexigens (strain ATCC BAA-138 / DSM 3043 / CIP 106854 / NCIMB 13768 / 1H11).